The following is a 315-amino-acid chain: Methionyl-tRNA formyltransferase (315 aa).

117–120 provides a ligand contact to (6S)-5,6,7,8-tetrahydrofolate; sequence SLLP.

The protein belongs to the Fmt family.

The enzyme catalyses L-methionyl-tRNA(fMet) + (6R)-10-formyltetrahydrofolate = N-formyl-L-methionyl-tRNA(fMet) + (6S)-5,6,7,8-tetrahydrofolate + H(+). In terms of biological role, attaches a formyl group to the free amino group of methionyl-tRNA(fMet). The formyl group appears to play a dual role in the initiator identity of N-formylmethionyl-tRNA by promoting its recognition by IF2 and preventing the misappropriation of this tRNA by the elongation apparatus. The polypeptide is Methionyl-tRNA formyltransferase (Methylibium petroleiphilum (strain ATCC BAA-1232 / LMG 22953 / PM1)).